We begin with the raw amino-acid sequence, 342 residues long: NADH-quinone oxidoreductase subunit H (342 aa).

8 helical membrane passes run 15–35 (LLII…LMVA), 86–106 (VLFI…WAVV), 119–139 (VGVL…IIAG), 159–179 (VSYE…VGSL), 190–210 (HVWF…SGLA), 251–271 (FMIC…PFDI), 277–297 (VPGP…FFWV), and 316–336 (VFLP…ELAG).

This sequence belongs to the complex I subunit 1 family. NDH-1 is composed of 14 different subunits. Subunits NuoA, H, J, K, L, M, N constitute the membrane sector of the complex.

It is found in the cell inner membrane. It catalyses the reaction a quinone + NADH + 5 H(+)(in) = a quinol + NAD(+) + 4 H(+)(out). Functionally, NDH-1 shuttles electrons from NADH, via FMN and iron-sulfur (Fe-S) centers, to quinones in the respiratory chain. The immediate electron acceptor for the enzyme in this species is believed to be ubiquinone. Couples the redox reaction to proton translocation (for every two electrons transferred, four hydrogen ions are translocated across the cytoplasmic membrane), and thus conserves the redox energy in a proton gradient. This subunit may bind ubiquinone. This is NADH-quinone oxidoreductase subunit H from Granulibacter bethesdensis (strain ATCC BAA-1260 / CGDNIH1).